The sequence spans 259 residues: Nodulation protein J (259 aa).

One can recognise an ABC transmembrane type-2 domain in the interval 30-256 (ASILGNLADP…LVSTALLRRR (227 aa)). The next 6 helical transmembrane spans lie at 32-52 (ILGN…GLGV), 64-84 (AFLA…FETI), 116-136 (AWAA…AAML), 141-161 (WLAL…FASL), 174-194 (YFIF…GAVF), and 228-248 (IANV…PFLV).

It belongs to the ABC-2 integral membrane protein family. Lipooligosaccharide exporter (TC 3.A.1.102) subfamily. As to quaternary structure, the complex is composed of two ATP-binding proteins (NodI) and two transmembrane proteins (NodJ).

The protein localises to the cell inner membrane. Part of the ABC transporter complex NodIJ involved in the export of the nodulation factors (Nod factors), the bacterial signal molecules that induce symbiosis and subsequent nodulation induction. Nod factors are LCO (lipo-chitin oligosaccharide), a modified beta-1,4-linked N-acetylglucosamine oligosaccharide. This subunit encodes the transporter. This Rhizobium leguminosarum bv. viciae protein is Nodulation protein J (nodJ).